The sequence spans 188 residues: Mediator of RNA polymerase II transcription subunit 29 (188 aa).

2 stretches are compositionally biased toward low complexity: residues 1 to 23 (MNPNMNMMPMSGPQMMQVMQSSP) and 30 to 43 (VQHQQQQPPQPLQQ). The tract at residues 1 to 43 (MNPNMNMMPMSGPQMMQVMQSSPSGPPGPVQHQQQQPPQPLQQ) is disordered.

This sequence belongs to the Mediator complex subunit 29 family. Component of the Mediator complex. Self-associates. Interacts with dsx.

It localises to the nucleus. Component of the Mediator complex, a coactivator involved in the regulated transcription of nearly all RNA polymerase II-dependent genes. Mediator functions as a bridge to convey information from gene-specific regulatory proteins to the basal RNA polymerase II transcription machinery. Mediator is recruited to promoters by direct interactions with regulatory proteins and serves as a scaffold for the assembly of a functional preinitiation complex with RNA polymerase II and the general transcription factors. Required for female somatic sexual development. The polypeptide is Mediator of RNA polymerase II transcription subunit 29 (ix) (Drosophila melanogaster (Fruit fly)).